The sequence spans 562 residues: Serine/threonine-protein kinase STN7, chloroplastic (562 aa).

The N-terminal 45 residues, 1–45 (MATISPGGAYIGTPSPFLGKKLKPFSLTSPILSFKPTVKLNSSCR), are a transit peptide targeting the chloroplast. The Protein kinase domain occupies 134–452 (FVVGKKLGEG…AKAALAHPYF (319 aa)). ATP contacts are provided by residues 140–148 (LGEGSFGVV) and Lys167. Asp279 acts as the Proton acceptor in catalysis. Ser526 carries the post-translational modification Phosphoserine. Thr537 and Thr541 each carry phosphothreonine.

Belongs to the protein kinase superfamily. Ser/Thr protein kinase family. Phosphorylated.

The protein localises to the plastid. The protein resides in the chloroplast thylakoid membrane. It carries out the reaction L-seryl-[protein] + ATP = O-phospho-L-seryl-[protein] + ADP + H(+). The enzyme catalyses L-threonyl-[protein] + ATP = O-phospho-L-threonyl-[protein] + ADP + H(+). In terms of biological role, serine/threonine protein kinase required for state transition by phosphorylating light-harvesting complex II outer antennae (LCHII). State transition plays a central role in response to environmental changes and allows to adjust to changing light conditions via the redistribution of light excitation energy between photosystem II (PSII) and photosystem I (PSI). Phosphorylates the minor light harvesting protein LHCB4.2/CP29 and is involved in the light-dependent phosphorylation of TSP9. Acts as a key component of the long-term response (LTR) signaling pathway. Mediates phosphorylation-dependent PTAC16 subcellular localization to regulate plastid gene expression. This chain is Serine/threonine-protein kinase STN7, chloroplastic (STN7), found in Arabidopsis thaliana (Mouse-ear cress).